Reading from the N-terminus, the 491-residue chain is Leucine aminopeptidase 1 (491 aa).

Positions 252 and 257 each coordinate Zn(2+). Lys-264 is a catalytic residue. Positions 275, 334, and 336 each coordinate Zn(2+). Arg-338 is an active-site residue.

This sequence belongs to the peptidase M17 family. Zn(2+) serves as cofactor. In terms of tissue distribution, expressed in the buccal cavity, pharynx, anterior gut and rectum.

The catalysed reaction is Release of an N-terminal amino acid, Xaa-|-Yaa-, in which Xaa is preferably Leu, but may be other amino acids including Pro although not Arg or Lys, and Yaa may be Pro. Amino acid amides and methyl esters are also readily hydrolyzed, but rates on arylamides are exceedingly low.. Functionally, probably acts as a digestive enzyme. This Caenorhabditis elegans protein is Leucine aminopeptidase 1 (lap-1).